Reading from the N-terminus, the 339-residue chain is UDP-N-acetylglucosamine--N-acetylmuramyl-(pentapeptide) pyrophosphoryl-undecaprenol N-acetylglucosamine transferase (339 aa).

UDP-N-acetyl-alpha-D-glucosamine-binding positions include 11–13, asparagine 127, arginine 170, serine 188, isoleucine 235, and glutamine 280; that span reads TGG.

This sequence belongs to the glycosyltransferase 28 family. MurG subfamily.

The protein localises to the cell inner membrane. The catalysed reaction is di-trans,octa-cis-undecaprenyl diphospho-N-acetyl-alpha-D-muramoyl-L-alanyl-D-glutamyl-meso-2,6-diaminopimeloyl-D-alanyl-D-alanine + UDP-N-acetyl-alpha-D-glucosamine = di-trans,octa-cis-undecaprenyl diphospho-[N-acetyl-alpha-D-glucosaminyl-(1-&gt;4)]-N-acetyl-alpha-D-muramoyl-L-alanyl-D-glutamyl-meso-2,6-diaminopimeloyl-D-alanyl-D-alanine + UDP + H(+). It participates in cell wall biogenesis; peptidoglycan biosynthesis. Cell wall formation. Catalyzes the transfer of a GlcNAc subunit on undecaprenyl-pyrophosphoryl-MurNAc-pentapeptide (lipid intermediate I) to form undecaprenyl-pyrophosphoryl-MurNAc-(pentapeptide)GlcNAc (lipid intermediate II). The polypeptide is UDP-N-acetylglucosamine--N-acetylmuramyl-(pentapeptide) pyrophosphoryl-undecaprenol N-acetylglucosamine transferase (Thermotoga petrophila (strain ATCC BAA-488 / DSM 13995 / JCM 10881 / RKU-1)).